Here is a 161-residue protein sequence, read N- to C-terminus: uncharacterized protein (161 aa).

It belongs to the M.jannaschii MJ0150/MJ0739/MJ0745/MJ1460/MJ1642 family.

This is an uncharacterized protein from Methanocaldococcus jannaschii (strain ATCC 43067 / DSM 2661 / JAL-1 / JCM 10045 / NBRC 100440) (Methanococcus jannaschii).